The following is a 356-amino-acid chain: tRNA-specific 2-thiouridylase MnmA (356 aa).

ATP contacts are provided by residues 8–15 (GMSGGVDS) and M34. C103 (nucleophile) is an active-site residue. A disulfide bridge links C103 with C199. G127 contributes to the ATP binding site. Residues 149–151 (KDQ) form an interaction with tRNA region. The Cysteine persulfide intermediate role is filled by C199. The segment at 305–306 (RY) is interaction with tRNA.

This sequence belongs to the MnmA/TRMU family.

Its subcellular location is the cytoplasm. The enzyme catalyses S-sulfanyl-L-cysteinyl-[protein] + uridine(34) in tRNA + AH2 + ATP = 2-thiouridine(34) in tRNA + L-cysteinyl-[protein] + A + AMP + diphosphate + H(+). Functionally, catalyzes the 2-thiolation of uridine at the wobble position (U34) of tRNA, leading to the formation of s(2)U34. The protein is tRNA-specific 2-thiouridylase MnmA of Clostridium kluyveri (strain ATCC 8527 / DSM 555 / NBRC 12016 / NCIMB 10680 / K1).